The sequence spans 185 residues: Ribosome-recycling factor (185 aa).

It belongs to the RRF family.

The protein localises to the cytoplasm. Its function is as follows. Responsible for the release of ribosomes from messenger RNA at the termination of protein biosynthesis. May increase the efficiency of translation by recycling ribosomes from one round of translation to another. This Streptococcus thermophilus (strain ATCC BAA-491 / LMD-9) protein is Ribosome-recycling factor.